Here is a 280-residue protein sequence, read N- to C-terminus: Hydroxyethylthiazole kinase (280 aa).

Met-50 provides a ligand contact to substrate. ATP-binding residues include Lys-125 and Thr-178. Gly-205 contributes to the substrate binding site.

The protein belongs to the Thz kinase family. Mg(2+) serves as cofactor.

The catalysed reaction is 5-(2-hydroxyethyl)-4-methylthiazole + ATP = 4-methyl-5-(2-phosphooxyethyl)-thiazole + ADP + H(+). Its pathway is cofactor biosynthesis; thiamine diphosphate biosynthesis; 4-methyl-5-(2-phosphoethyl)-thiazole from 5-(2-hydroxyethyl)-4-methylthiazole: step 1/1. In terms of biological role, catalyzes the phosphorylation of the hydroxyl group of 4-methyl-5-beta-hydroxyethylthiazole (THZ). The polypeptide is Hydroxyethylthiazole kinase (Lacticaseibacillus casei (strain BL23) (Lactobacillus casei)).